The chain runs to 118 residues: uncharacterized protein (118 aa).

The chain crosses the membrane as a helical span at residues 41-61; sequence IFLLIIITIIFALTMYTSVQV.

The protein localises to the host membrane. This is an uncharacterized protein from Ostreid herpesvirus 1 (isolate France) (OsHV-1).